The chain runs to 120 residues: Ribonuclease P protein component 2 (120 aa).

This sequence belongs to the eukaryotic/archaeal RNase P protein component 2 family. As to quaternary structure, consists of a catalytic RNA component and at least 4-5 protein subunits.

It localises to the cytoplasm. The catalysed reaction is Endonucleolytic cleavage of RNA, removing 5'-extranucleotides from tRNA precursor.. In terms of biological role, part of ribonuclease P, a protein complex that generates mature tRNA molecules by cleaving their 5'-ends. The chain is Ribonuclease P protein component 2 from Thermococcus gammatolerans (strain DSM 15229 / JCM 11827 / EJ3).